We begin with the raw amino-acid sequence, 215 residues long: Penicillin-binding protein activator LpoB (215 aa).

A signal peptide spans 1 to 19 (MMKMCRYALITALAIFLAG). The N-palmitoyl cysteine moiety is linked to residue cysteine 20. Residue cysteine 20 is the site of S-diacylglycerol cysteine attachment. Positions 28–78 (APVEEAKPQPQQPAQPQPTVPTVPAVPSVPAQPGPIEHQDQQSGQPAPRVR) are disordered. Residues 37 to 48 (PQQPAQPQPTVP) show a composition bias toward pro residues. Positions 49 to 58 (TVPAVPSVPA) are enriched in low complexity.

Belongs to the LpoB family. In terms of assembly, interacts with PBP1b.

It is found in the cell outer membrane. Its function is as follows. Regulator of peptidoglycan synthesis that is essential for the function of penicillin-binding protein 1B (PBP1b). The chain is Penicillin-binding protein activator LpoB from Klebsiella pneumoniae subsp. pneumoniae (strain ATCC 700721 / MGH 78578).